A 424-amino-acid chain; its full sequence is Serine--tRNA ligase (424 aa).

231–233 (TAE) provides a ligand contact to L-serine. ATP is bound at residue 262–264 (RSE). Position 285 (Glu285) interacts with L-serine. Residue 349 to 352 (EISS) coordinates ATP. Residue Ser385 coordinates L-serine.

The protein belongs to the class-II aminoacyl-tRNA synthetase family. Type-1 seryl-tRNA synthetase subfamily. As to quaternary structure, homodimer. The tRNA molecule binds across the dimer.

It is found in the cytoplasm. It catalyses the reaction tRNA(Ser) + L-serine + ATP = L-seryl-tRNA(Ser) + AMP + diphosphate + H(+). The catalysed reaction is tRNA(Sec) + L-serine + ATP = L-seryl-tRNA(Sec) + AMP + diphosphate + H(+). It functions in the pathway aminoacyl-tRNA biosynthesis; selenocysteinyl-tRNA(Sec) biosynthesis; L-seryl-tRNA(Sec) from L-serine and tRNA(Sec): step 1/1. Catalyzes the attachment of serine to tRNA(Ser). Is also able to aminoacylate tRNA(Sec) with serine, to form the misacylated tRNA L-seryl-tRNA(Sec), which will be further converted into selenocysteinyl-tRNA(Sec). This is Serine--tRNA ligase from Bacillus cereus (strain AH187).